We begin with the raw amino-acid sequence, 46 residues long: Photosystem II reaction center protein Psb30 (46 aa).

Residue Met-1 is modified to N-formylmethionine. Residues 1–20 (MGIFNGIIEFLSNINFEVIA) lie on the Lumenal side of the membrane. The helical transmembrane segment at 21 to 38 (QLTMIAMIGIAGPMIIFL) threads the bilayer. The Cytoplasmic portion of the chain corresponds to 39–46 (LAVRRGNL).

The protein belongs to the Psb30/Ycf12 family. As to quaternary structure, PSII is composed of 1 copy each of membrane proteins PsbA, PsbB, PsbC, PsbD, PsbE, PsbF, PsbH, PsbI, PsbJ, PsbK, PsbL, PsbM, PsbT, PsbX, PsbY, PsbZ, Psb30/Ycf12, peripheral proteins PsbO, CyanoQ (PsbQ), PsbU, PsbV and a large number of cofactors. It forms dimeric complexes. Part of a photosystem II (PSII) assembly intermediate complex PSII-I; crystallized from a strain deleted of psbJ, it forms monomeric PSII before addition of the oxygen evolving complex. PSII-I includes 3 assembly factors not found in mature PSII (Psb27, Psb28 and Psb34). PSII binds multiple chlorophylls, carotenoids and specific lipids. serves as cofactor.

The protein resides in the cellular thylakoid membrane. Its function is as follows. A core subunit of photosystem II (PSII). PSII is a light-driven water plastoquinone oxidoreductase, using light energy to abstract electrons from H(2)O, generating a proton gradient subsequently used for ATP formation. Helps stabilize PSII. This chain is Photosystem II reaction center protein Psb30, found in Thermosynechococcus vestitus (strain NIES-2133 / IAM M-273 / BP-1).